The following is a 331-amino-acid chain: Homeobox protein DBX1 (331 aa).

Disordered stretches follow at residues 56-94 and 232-331; these read RAVP…ISSN and KERE…ITVS. The segment at residues 173-232 is a DNA-binding region (homeobox); that stretch reads GMLRRAVFSDVQRKALEKMFQKQKYISKPDRKKLAGKLGLKDSQVKIWFQNRRMKWRNSK. Residues 256–266 show a composition bias toward basic and acidic residues; that stretch reads DLSDVSKKSSG. Over residues 299 to 314 the composition is skewed to low complexity; it reads PSSPFNSSSASKPSDF. Over residues 315 to 331 the composition is skewed to acidic residues; sequence SDSEEEGGEQEEEITVS.

It belongs to the H2.0 homeobox family.

It is found in the nucleus. In terms of biological role, may function within the midpoint progenitor population to inhibit neuronal differentiation, possibly through modulating the function of Xash3. This Xenopus laevis (African clawed frog) protein is Homeobox protein DBX1 (dbx1).